The chain runs to 331 residues: Probable allantoicase (331 aa).

It belongs to the allantoicase family.

It catalyses the reaction allantoate + H2O = (S)-ureidoglycolate + urea. Its pathway is nitrogen metabolism; (S)-allantoin degradation; (S)-ureidoglycolate from allantoate (aminidohydrolase route): step 1/1. In Stutzerimonas stutzeri (strain A1501) (Pseudomonas stutzeri), this protein is Probable allantoicase.